The sequence spans 338 residues: METKLFSPWTLKGVTLKNRIVMSPMCMYSSYDRDGKLQPFHFTHYISRAQGQAGLIMVEASAVSPEGRISDQDLGIWSDEHIEGFASLNEQIKAYGTKTAIQLAHAGRKAELDGDILAPSSIPFDEQSKTPVQMSVDQIKDTVQAFQDAAVRAKKAGFDIIEIHGAHGYLINEFLSPLANHRTDDYGGSPENRYRFLREVVNAVNEVWDGPLFVRVSASDYTTKGLDIADYIGIATWLKEQGVDLIDVSSGAVVQARISTFPGYQVTFAEKIKEGAGIQTGAVGLITSGVQAEEILRNQRADLIFIGREFLRDPYFPKTAAEELRTSIEGPRQYDRAW.

23-26 (SPMC) provides a ligand contact to FMN. Tyr-28 is a substrate binding site. Positions 60 and 102 each coordinate FMN. Substrate is bound at residue 164–167 (HGAH). FMN is bound by residues Arg-215 and 307–308 (GR).

Belongs to the NADH:flavin oxidoreductase/NADH oxidase family. NamA subfamily. Homotetramer. It depends on FMN as a cofactor.

It catalyses the reaction A + NADPH + H(+) = AH2 + NADP(+). Functionally, catalyzes the reduction of the double bond of an array of alpha,beta-unsaturated aldehydes and ketones. It also reduces the nitro group of nitroester and nitroaromatic compounds. It could have a role in detoxification processes. This is NADPH dehydrogenase from Bacillus pumilus (strain SAFR-032).